Reading from the N-terminus, the 952-residue chain is MPGKIENGTPKDLKTGNDFVSAAKSLLDRAFKSHHSYYGLCSTSCQVYDTAWVAMIPKTRDNVKQWLFPECFHYLLKTQAADGSWGSLPTTQTAGILDTASAVLALLCHAQEPLQILDVSPDEMGLRIEHGVTSLKRQLAVWNDVEDTNHIGVEFIIPALLSMLEKELDVPSFEFPCRSILERMHGEKLGHFDLEQVYGKPSSLLHSLEAFLGKLDFDRLSHHLYHGSMMASPSSTAAYLIGATKWDDEAEDYLRHVMRNGAGHGNGGISGTFPTTHFECSWIIATLLKVGFTLKQIDGDGLRGLSTILLEALRDENGVIGFAPRTADVDDTAKALLALSLVNQPVSPDIMIKVFEGKDHFTTFGSERDPSLTSNLHVLLSLLKQSNLSQYHPQILKTTLFTCRWWWGSDHCVKDKWNLSHLYPTMLLVEAFTEVLHLIDGGELSSLFDESFKCKIGLSIFQAVLRIILTQDNDGSWRGYREQTCYAILALVQARHVCFFTHMVDRLQSCVDRGFSWLKSCSFHSQDLTWTSKTAYEVGFVAEAYKLAALQSASLEVPAATIGHSVTSAVPSSDLEKYMRLVRKTALFSPLDEWGLMASIIESSFFVPLLQAQRVEIYPRDNIKVDEDKYLSIIPFTWVGCNNRSRTFASNRWLYDMMYLSLLGYQTDEYMEAVAGPVFGDVSLLHQTIDKVIDNTMGNLARANGTVHSGNGHQHESPNIGQVEDTLTRFTNSVLNHKDVLNSSSSDQDTLRREFRTFMHAHITQIEDNSRFSKQASSDAFSSPEQSYFQWVNSTGGSHVACAYSFAFSNCLMSANLLQGKDAFPSGTQKYLISSVMRHATNMCRMYNDFGSIARDNAERNVNSIHFPEFTLCNGTSQNLDERKERLLKIATYEQGYLDRALEALERQSRDDAGDRAGSKDMRKLKIVKLFCDVTDLYDQLYVIKDLSSSMK.

Mg(2+)-binding residues include D668, E672, N848, D849, S852, and D856. The DEXXE motif signature appears at 668 to 672 (DEYME).

The protein belongs to the terpene synthase family. Mg(2+) is required as a cofactor.

The catalysed reaction is ent-copalyl diphosphate = ent-kaur-16-ene + diphosphate. The enzyme catalyses (2E,6E,10E)-geranylgeranyl diphosphate = ent-copalyl diphosphate. The protein operates within plant hormone biosynthesis; gibberellin biosynthesis. Functionally, catalyzes the conversion of geranylgeranyl diphosphate to the gibberellin precursor ent-kaurene diphosphate in a two step process. This is Ent-kaur-16-ene synthase (cps) from Fusarium fujikuroi (Bakanae and foot rot disease fungus).